A 33-amino-acid polypeptide reads, in one-letter code: uncharacterized protein (33 aa).

Residues 1-12 are Cytoplasmic-facing; that stretch reads MKENKVQQISHK. A helical membrane pass occupies residues 13–33; sequence LINIVVFVAIVEYAYLFLHFY.

Its subcellular location is the cell inner membrane. This is an uncharacterized protein from Escherichia coli (strain K12).